A 494-amino-acid chain; its full sequence is NADH-quinone oxidoreductase subunit N 2 (494 aa).

Transmembrane regions (helical) follow at residues 14–34 (LPQI…GMLL), 45–65 (IAML…PLTA), 82–102 (VVQV…GSVL), 116–136 (IGEF…LVST), 139–159 (LLLI…LTAF), 174–194 (FLFG…LYGV), 214–234 (LLVA…AAPF), 262–282 (FFVF…NAAW), 289–309 (WMPI…LAAL), 317–337 (LLAY…IAHT), 344–364 (LLYY…VLAI), 388–408 (ACLL…GFFA), 422–442 (AFGL…ALFY), and 470–490 (ITLL…NLLM).

It belongs to the complex I subunit 2 family. As to quaternary structure, NDH-1 is composed of 14 different subunits. Subunits NuoA, H, J, K, L, M, N constitute the membrane sector of the complex.

The protein resides in the cell inner membrane. The enzyme catalyses a quinone + NADH + 5 H(+)(in) = a quinol + NAD(+) + 4 H(+)(out). Functionally, NDH-1 shuttles electrons from NADH, via FMN and iron-sulfur (Fe-S) centers, to quinones in the respiratory chain. The immediate electron acceptor for the enzyme in this species is believed to be ubiquinone. Couples the redox reaction to proton translocation (for every two electrons transferred, four hydrogen ions are translocated across the cytoplasmic membrane), and thus conserves the redox energy in a proton gradient. This is NADH-quinone oxidoreductase subunit N 2 from Acidobacterium capsulatum (strain ATCC 51196 / DSM 11244 / BCRC 80197 / JCM 7670 / NBRC 15755 / NCIMB 13165 / 161).